The primary structure comprises 382 residues: uncharacterized protein (382 aa).

12 consecutive transmembrane segments (helical) span residues 14 to 34 (GLLLLTLAIAVLNTLVPLWLA), 45 to 65 (VVSSSYFTGNLVGTLLTGYVI), 79 to 99 (FIFAAGCAGLGLMIGFWSWLA), 102 to 122 (FVAGIGCAMIWVVVESALMCS), 131 to 151 (LLAAYMMVYYVGTFLGQLLVS), 157 to 177 (LMSVLPWVTGLTLAGILPLLF), 204 to 224 (LGVNGCIISGIVLGSLYGLMP), 235 to 255 (ASIGFWMAVLVSAGILGQWPI), 270 to 290 (VQVFVVILGSIAMLSQAAMAP), 291 to 311 (ALFILGAAGFTLYPVAMAWAC), 325 to 345 (ALLLSYTVGSLLGPSFTAMLM), and 348 to 368 (FSDNLLFIMIASVSFIYLLML).

It belongs to the major facilitator superfamily. YcaD (TC 2.A.1.26) family.

The protein resides in the cell inner membrane. This is an uncharacterized protein from Escherichia coli O45:K1 (strain S88 / ExPEC).